Here is a 37-residue protein sequence, read N- to C-terminus: Cytochrome b6-f complex subunit 5 (37 aa).

A helical transmembrane segment spans residues 5 to 25 (LLSGIVPGLIPITLAGSFVIA).

This sequence belongs to the PetG family. As to quaternary structure, the 4 large subunits of the cytochrome b6-f complex are cytochrome b6, subunit IV (17 kDa polypeptide, PetD), cytochrome f and the Rieske protein, while the 4 small subunits are PetG, PetL, PetM and PetN. The complex functions as a dimer.

Its subcellular location is the plastid membrane. Its function is as follows. Component of the cytochrome b6-f complex, which mediates electron transfer between photosystem II (PSII) and photosystem I (PSI), cyclic electron flow around PSI, and state transitions. PetG is required for either the stability or assembly of the cytochrome b6-f complex. In Aneura mirabilis (Parasitic liverwort), this protein is Cytochrome b6-f complex subunit 5.